A 108-amino-acid polypeptide reads, in one-letter code: Anti-sigma-B factor antagonist (108 aa).

Residues 3–108 form the STAS domain; sequence LNIETITHDD…MHVNEGTEVE (106 aa). A Phosphoserine modification is found at Ser-57.

Belongs to the anti-sigma-factor antagonist family. Phosphorylated by RsbW on a serine residue.

In terms of biological role, positive regulator of sigma-B activity. Non-phosphorylated RsbV binds to RsbW, preventing its association with sigma-B. When phosphorylated, releases RsbW, which is then free to complex with and inactivate sigma-B. This Staphylococcus epidermidis protein is Anti-sigma-B factor antagonist (rsbV).